The chain runs to 111 residues: Small ribosomal subunit protein bS16 (111 aa).

Belongs to the bacterial ribosomal protein bS16 family.

This chain is Small ribosomal subunit protein bS16, found in Rickettsia canadensis (strain McKiel).